The following is a 1341-amino-acid chain: DNA-directed RNA polymerase subunit beta (1341 aa).

This sequence belongs to the RNA polymerase beta chain family. In terms of assembly, the RNAP catalytic core consists of 2 alpha, 1 beta, 1 beta' and 1 omega subunit. When a sigma factor is associated with the core the holoenzyme is formed, which can initiate transcription.

It catalyses the reaction RNA(n) + a ribonucleoside 5'-triphosphate = RNA(n+1) + diphosphate. In terms of biological role, DNA-dependent RNA polymerase catalyzes the transcription of DNA into RNA using the four ribonucleoside triphosphates as substrates. This Vibrio cholerae serotype O1 (strain ATCC 39315 / El Tor Inaba N16961) protein is DNA-directed RNA polymerase subunit beta.